The following is a 310-amino-acid chain: tRNA pseudouridine synthase B (310 aa).

Catalysis depends on Asp49, which acts as the Nucleophile.

Belongs to the pseudouridine synthase TruB family. Type 1 subfamily.

It catalyses the reaction uridine(55) in tRNA = pseudouridine(55) in tRNA. Responsible for synthesis of pseudouridine from uracil-55 in the psi GC loop of transfer RNAs. The protein is tRNA pseudouridine synthase B of Rhizobium johnstonii (strain DSM 114642 / LMG 32736 / 3841) (Rhizobium leguminosarum bv. viciae).